Consider the following 483-residue polypeptide: Sphingomyelin phosphodiesterase 5 (483 aa).

Residues 1–20 (MSLPDISRRRSPVPQEDWPL) are disordered. The chain crosses the membrane as a helical span at residues 80–100 (VLLPLVVVGLPLALVGLALWL). A Mg(2+)-binding site is contributed by Glu209. Catalysis depends on His471, which acts as the Proton acceptor.

Belongs to the neutral sphingomyelinase family. Mg(2+) is required as a cofactor. Mn(2+) serves as cofactor. In terms of tissue distribution, highly expressed in testis, pancreas, epididymis, and brain.

It localises to the mitochondrion inner membrane. It is found in the endoplasmic reticulum membrane. The enzyme catalyses a sphingomyelin + H2O = phosphocholine + an N-acylsphing-4-enine + H(+). The catalysed reaction is N-(hexadecanoyl)-sphing-4-enine-1-phosphocholine + H2O = N-hexadecanoylsphing-4-enine + phosphocholine + H(+). The protein operates within lipid metabolism; sphingolipid metabolism. Activated by anionic phospholipids, specially cardiolipin and phosphatidylserine. Functionally, catalyzes the hydrolysis of membrane sphingomyelin to form phosphorylcholine and ceramide. This Mus musculus (Mouse) protein is Sphingomyelin phosphodiesterase 5.